The primary structure comprises 122 residues: Large ribosomal subunit protein uL14 (122 aa).

The protein belongs to the universal ribosomal protein uL14 family. In terms of assembly, part of the 50S ribosomal subunit. Forms a cluster with proteins L3 and L19. In the 70S ribosome, L14 and L19 interact and together make contacts with the 16S rRNA in bridges B5 and B8.

Binds to 23S rRNA. Forms part of two intersubunit bridges in the 70S ribosome. The chain is Large ribosomal subunit protein uL14 from Dechloromonas aromatica (strain RCB).